The chain runs to 504 residues: ATP synthase subunit alpha, chloroplastic (504 aa).

Residue 170–177 (GDRQTGKT) coordinates ATP. T257 is subject to Phosphothreonine.

This sequence belongs to the ATPase alpha/beta chains family. As to quaternary structure, F-type ATPases have 2 components, CF(1) - the catalytic core - and CF(0) - the membrane proton channel. CF(1) has five subunits: alpha(3), beta(3), gamma(1), delta(1), epsilon(1). CF(0) has four main subunits: a, b, b' and c.

Its subcellular location is the plastid. It localises to the chloroplast thylakoid membrane. The catalysed reaction is ATP + H2O + 4 H(+)(in) = ADP + phosphate + 5 H(+)(out). In terms of biological role, produces ATP from ADP in the presence of a proton gradient across the membrane. The alpha chain is a regulatory subunit. The protein is ATP synthase subunit alpha, chloroplastic of Nasturtium officinale (Watercress).